A 21-amino-acid polypeptide reads, in one-letter code: Ocellatin-4 (21 aa).

I21 bears the Isoleucine amide mark.

Expressed by the skin dorsal glands.

The protein resides in the secreted. Functionally, has hemolytic activity against human erythrocytes (HC50=14.3 uM). Has antibacterial activity against the Gram-positive bacterium S.aureus ATCC 25923 (MIC=64 uM) and the Gram-negative bacterium E.coli ATCC 25922 (MIC=64 uM). This is Ocellatin-4 from Leptodactylus ocellatus (Argus frog).